Here is a 159-residue protein sequence, read N- to C-terminus: Small heat shock protein hspM (159 aa).

Positions 1 to 159 constitute a sHSP domain; the sequence is MFVLNFELAG…LSNNIKIQIN (159 aa). A disordered region spans residues 35–101; that stretch reads MNNNNKNNLQ…NNNNKSSKTN (67 aa). Low complexity-rich tracts occupy residues 36-46 and 61-95; these read NNNNKNNLQIN and SSSS…NNNN.

It belongs to the small heat shock protein (HSP20) family.

The sequence is that of Small heat shock protein hspM (hspM) from Dictyostelium discoideum (Social amoeba).